Here is an 803-residue protein sequence, read N- to C-terminus: Ribonucleoside-diphosphate reductase large chain (803 aa).

Positions 1–91 (MYVVNRKGEE…TSNLHKNTSS (91 aa)) constitute an ATP-cone domain. ATP contacts are provided by residues 5–6 (NR), 11–17 (EPVSFDQ), Thr-52, and Asp-56. GDP is bound at residue Ser-215. Cys-216 and Cys-442 are disulfide-bonded. DTTP is bound by residues 224-226 (DSI), Lys-241, Arg-254, and 261-262 (RG). Residue Asn-425 coordinates GDP. Residue Asn-425 is the Proton acceptor of the active site. Cys-427 serves as the catalytic Cysteine radical intermediate. Residues Glu-429 and 604–607 (TAST) each bind GDP. The active-site Proton acceptor is Glu-429.

It belongs to the ribonucleoside diphosphate reductase large chain family. In terms of assembly, heterodimer of a large and a small subunit.

The enzyme catalyses a 2'-deoxyribonucleoside 5'-diphosphate + [thioredoxin]-disulfide + H2O = a ribonucleoside 5'-diphosphate + [thioredoxin]-dithiol. With respect to regulation, under complex allosteric control mediated by deoxynucleoside triphosphates and ATP binding to separate specificity and activation sites on the large subunit. The type of nucleotide bound at the specificity site determines substrate preference. It seems probable that ATP makes the enzyme reduce CDP and UDP, dGTP favors ADP reduction and dTTP favors GDP reduction. Stimulated by ATP and inhibited by dATP binding to the activity site. Provides the precursors necessary for DNA synthesis. Catalyzes the biosynthesis of deoxyribonucleotides from the corresponding ribonucleotides. In Cryptosporidium parvum, this protein is Ribonucleoside-diphosphate reductase large chain (RNR1).